The chain runs to 323 residues: Methionyl-tRNA formyltransferase (323 aa).

115–118 contacts (6S)-5,6,7,8-tetrahydrofolate; that stretch reads SLLP.

Belongs to the Fmt family.

The catalysed reaction is L-methionyl-tRNA(fMet) + (6R)-10-formyltetrahydrofolate = N-formyl-L-methionyl-tRNA(fMet) + (6S)-5,6,7,8-tetrahydrofolate + H(+). In terms of biological role, attaches a formyl group to the free amino group of methionyl-tRNA(fMet). The formyl group appears to play a dual role in the initiator identity of N-formylmethionyl-tRNA by promoting its recognition by IF2 and preventing the misappropriation of this tRNA by the elongation apparatus. In Lactococcus lactis subsp. cremoris (strain SK11), this protein is Methionyl-tRNA formyltransferase.